Reading from the N-terminus, the 331-residue chain is Terpene synthase 8 (331 aa).

The DDxx(x)D/E motif signature appears at 97-102 (DDFYLE). The short motif at 228 to 236 (NDIYSFNKE) is the NDxxSxxxD/E motif element.

The protein belongs to the terpene synthase family.

Functionally, terpene synthase that converts its substrate farnesyl diphosphate (FPP) into several yet unidentified sesquiterpenes. The chain is Terpene synthase 8 from Dictyostelium purpureum (Slime mold).